Here is a 704-residue protein sequence, read N- to C-terminus: Acetate--CoA ligase [ADP-forming] (704 aa).

The protein in the N-terminal section; belongs to the acetate CoA ligase alpha subunit family. It in the C-terminal section; belongs to the acetate CoA ligase beta subunit family. In terms of assembly, homodimer.

The catalysed reaction is acetate + ATP + CoA = acetyl-CoA + ADP + phosphate. Its function is as follows. Catalyzes the formation of acetate and ATP from acetyl-CoA by using ADP and phosphate. Can also use butyryl-CoA, but not phenylacetyl-CoA. Cannot catalyze the reverse reaction. The sequence is that of Acetate--CoA ligase [ADP-forming] from Methanocaldococcus jannaschii (strain ATCC 43067 / DSM 2661 / JAL-1 / JCM 10045 / NBRC 100440) (Methanococcus jannaschii).